Reading from the N-terminus, the 199-residue chain is Recombination protein RecR (199 aa).

Residues 57-72 form a C4-type zinc finger; sequence CSSCRTFTEESLCPIC. The Toprim domain maps to 81-176; it reads DLICVVETPA…NVSRIAHGVP (96 aa).

Belongs to the RecR family.

Its function is as follows. May play a role in DNA repair. It seems to be involved in an RecBC-independent recombinational process of DNA repair. It may act with RecF and RecO. The polypeptide is Recombination protein RecR (Shewanella loihica (strain ATCC BAA-1088 / PV-4)).